Reading from the N-terminus, the 419-residue chain is L-rhamnose isomerase (419 aa).

Positions 262, 294, and 296 each coordinate Mn(2+).

It belongs to the rhamnose isomerase family. As to quaternary structure, homotetramer. Requires Mn(2+) as cofactor.

The protein resides in the cytoplasm. The enzyme catalyses L-rhamnopyranose = L-rhamnulose. Its pathway is carbohydrate degradation; L-rhamnose degradation; glycerone phosphate from L-rhamnose: step 1/3. Functionally, catalyzes the interconversion of L-rhamnose and L-rhamnulose. This chain is L-rhamnose isomerase, found in Escherichia coli O45:K1 (strain S88 / ExPEC).